A 47-amino-acid polypeptide reads, in one-letter code: Large ribosomal subunit protein bL34 (47 aa).

The protein belongs to the bacterial ribosomal protein bL34 family.

The chain is Large ribosomal subunit protein bL34 from Mycobacterium sp. (strain JLS).